The primary structure comprises 298 residues: Aquaporin NIP2-1 (298 aa).

3 N-linked (GlcNAc...) asparagine glycosylation sites follow: Asn-4, Asn-13, and Asn-26. The next 2 helical transmembrane spans lie at Val-51–Ile-71 and Ser-85–Ala-105. Residues Asn-108–Ala-110 carry the NPA 1 motif. The next 3 membrane-spanning stretches (helical) occupy residues Ile-124–Leu-144, Ser-166–Thr-186, and Leu-194–Ser-214. Residues Asn-219–Ala-221 carry the NPA 2 motif. The chain crosses the membrane as a helical span at residues Trp-237–Ile-257.

This sequence belongs to the MIP/aquaporin (TC 1.A.8) family. NIP (TC 1.A.8.12) subfamily. Mainly expressed in the roots. In roots, it localizes in the main and lateral roots, but not in root hairs. Within a root, it localizes on the plasma membrane of the distal side of both exodermis and endodermis, where casparian strips exist (at protein level). Expressed low levels in leaves and anthers.

Its subcellular location is the cell membrane. Silicon influx transporter responsible for silicon transport from the external solution to the root cells. Is coupled with the silicon efflux transporter LSI2 in both exodermal and endodermal root cells for an efficient silicon transport across the cells into the stele. Silicon is beneficial to plant growth and helps plants to overcome abiotic and biotic stresses by preventing lodging (falling over) and increasing resistance to pests and diseases, as well as other stresses. Is coupled with LSI2 transporter in roots for efficient uptake of arsenite, which is further dispatched in shoots and grains. Mediates uptake of methylated arsenic species in roots. The protein is Aquaporin NIP2-1 of Oryza sativa subsp. japonica (Rice).